The primary structure comprises 116 residues: Aspartate 1-decarboxylase (116 aa).

The active-site Schiff-base intermediate with substrate; via pyruvic acid is the Ser-25. At Ser-25 the chain carries Pyruvic acid (Ser). Thr-57 provides a ligand contact to substrate. Tyr-58 serves as the catalytic Proton donor. Position 73 to 75 (73 to 75 (GAA)) interacts with substrate.

This sequence belongs to the PanD family. As to quaternary structure, heterooctamer of four alpha and four beta subunits. The cofactor is pyruvate. In terms of processing, is synthesized initially as an inactive proenzyme, which is activated by self-cleavage at a specific serine bond to produce a beta-subunit with a hydroxyl group at its C-terminus and an alpha-subunit with a pyruvoyl group at its N-terminus.

Its subcellular location is the cytoplasm. It carries out the reaction L-aspartate + H(+) = beta-alanine + CO2. Its pathway is cofactor biosynthesis; (R)-pantothenate biosynthesis; beta-alanine from L-aspartate: step 1/1. In terms of biological role, catalyzes the pyruvoyl-dependent decarboxylation of aspartate to produce beta-alanine. The chain is Aspartate 1-decarboxylase from Syntrophus aciditrophicus (strain SB).